The primary structure comprises 482 residues: Pre-glycoprotein polyprotein GP complex (482 aa).

Glycine 2 is lipidated: N-myristoyl glycine; by host. At 2 to 17 the chain is on the extracellular side; it reads GQFISFMQEIPIFLQE. The chain crosses the membrane as a helical span at residues 18–32; the sequence is ALNIALVAVSLICIV. Residue lysine 33 is a topological domain, cytoplasmic. A helical transmembrane segment spans residues 34–53; sequence GLVNLYRCGLFQLMVFLVLA. Extracellular-facing segments span residues 54–58 and 59–421; these read GRSCS and EETF…TLVD. Cysteine 57 lines the Zn(2+) pocket. Asparagine 83 and asparagine 95 each carry an N-linked (GlcNAc...) asparagine; by host glycan. Disulfide bonds link cysteine 92/cysteine 224, cysteine 134/cysteine 162, cysteine 205/cysteine 211, cysteine 269/cysteine 282, and cysteine 353/cysteine 374. Asparagine 164 and asparagine 176 each carry an N-linked (GlcNAc...) asparagine; by host glycan. N-linked (GlcNAc...) asparagine; by host glycosylation is found at asparagine 354, asparagine 362, asparagine 379, and asparagine 384. The helical transmembrane segment at 422-442 threads the bilayer; sequence ICFWSTEFFISTLFLHLIGFP. The Cytoplasmic segment spans residues 443-482; it reads THEHIRGEGCPLPHRLNSMGGCRCGKYLPLKKPTIWHRRH. Zn(2+) is bound by residues histidine 444, histidine 446, cysteine 452, histidine 456, cysteine 464, cysteine 466, and histidine 482.

This sequence belongs to the arenaviridae GPC protein family. As to quaternary structure, homotetramer; disulfide-linked. In terms of assembly, homotetramer. GP2 homotetramers bind through ionic interactions with GP1 homotetramers to form the GP complex together with the stable signal peptide. The GP-C polyprotein interacts with the host protease MBTPS1/SKI-1 resulting in the polyprotein processing. Specific enzymatic cleavages in vivo yield mature proteins. GP-C polyprotein is cleaved in the endoplasmic reticulum by the host protease MBTPS1. Only cleaved glycoprotein is incorporated into virions. Post-translationally, the SSP remains stably associated with the GP complex following cleavage by signal peptidase and plays crucial roles in the trafficking of GP through the secretory pathway. In terms of processing, myristoylation is necessary for GP2-mediated fusion activity.

It is found in the virion membrane. It localises to the host endoplasmic reticulum membrane. The protein resides in the host Golgi apparatus membrane. The protein localises to the host cell membrane. Class I viral fusion protein that directs fusion of viral and host endosomal membranes, leading to delivery of the nucleocapsid into the cytoplasm. Membrane fusion is mediated by irreversible conformational changes induced upon acidification in the endosome. Functionally, stable signal peptide (SSP): cleaved and functions as a signal peptide. In addition, it is also retained as the third component of the GP complex. The SSP is required for efficient glycoprotein expression, post-translational maturation cleavage of GP1 and GP2, glycoprotein transport to the cell surface plasma membrane, formation of infectious virus particles, and acid pH-dependent glycoprotein-mediated cell fusion. Its function is as follows. Interacts with the host receptor. The sequence is that of Pre-glycoprotein polyprotein GP complex from Artibeus (neotropical fruit bats).